A 118-amino-acid chain; its full sequence is NADH-quinone oxidoreductase subunit A (118 aa).

A run of 3 helical transmembrane segments spans residues 5–25 (YAFI…PLVL), 62–82 (LYAL…PWAV), and 87–107 (LGLF…IGLV).

This sequence belongs to the complex I subunit 3 family. In terms of assembly, NDH-1 is composed of 14 different subunits. Subunits NuoA, H, J, K, L, M, N constitute the membrane sector of the complex.

Its subcellular location is the cell membrane. The catalysed reaction is a quinone + NADH + 5 H(+)(in) = a quinol + NAD(+) + 4 H(+)(out). NDH-1 shuttles electrons from NADH, via FMN and iron-sulfur (Fe-S) centers, to quinones in the respiratory chain. The immediate electron acceptor for the enzyme in this species is believed to be ubiquinone. Couples the redox reaction to proton translocation (for every two electrons transferred, four hydrogen ions are translocated across the cytoplasmic membrane), and thus conserves the redox energy in a proton gradient. The protein is NADH-quinone oxidoreductase subunit A of Herpetosiphon aurantiacus (strain ATCC 23779 / DSM 785 / 114-95).